The following is a 349-amino-acid chain: Green-sensitive opsin-4 (349 aa).

Residues M1–Q36 lie on the Extracellular side of the membrane. Residues N2 and N15 are each glycosylated (N-linked (GlcNAc...) asparagine). The helical transmembrane segment at F37–V61 threads the bilayer. Residues T62–N73 are Cytoplasmic-facing. A helical transmembrane segment spans residues F74 to I99. The Extracellular segment spans residues N100–E113. Residues C110 and C187 are joined by a disulfide bond. A helical membrane pass occupies residues G114–V133. The Cytoplasmic portion of the chain corresponds to E134–H152. A helical membrane pass occupies residues A153–S176. Over R177–S202 the chain is Extracellular. N-linked (GlcNAc...) asparagine glycosylation is present at N200. A helical membrane pass occupies residues Y203 to V230. Residues K231 to R252 are Cytoplasmic-facing. The helical transmembrane segment at M253–F276 threads the bilayer. The Extracellular portion of the chain corresponds to F277–S284. A helical transmembrane segment spans residues A285–L309. Position 296 is an N6-(retinylidene)lysine (K296). Topologically, residues N310–A349 are cytoplasmic. A disordered region spans residues G329–A349. A compositionally biased stretch (low complexity) spans S334–A349.

It belongs to the G-protein coupled receptor 1 family. Opsin subfamily. In terms of processing, phosphorylated on some or all of the serine and threonine residues present in the C-terminal region. In terms of tissue distribution, retinal double cone accessory photoreceptor cell outer segments.

The protein resides in the membrane. Visual pigments are the light-absorbing molecules that mediate vision. They consist of an apoprotein, opsin, covalently linked to cis-retinal. In Danio rerio (Zebrafish), this protein is Green-sensitive opsin-4 (opn1mw4).